A 552-amino-acid chain; its full sequence is MAGUK p55 subfamily member 2 (552 aa).

2 consecutive L27 domains span residues 8–59 (SESA…EETK) and 60–118 (LEAV…YETP). S42 carries the post-translational modification Phosphoserine. T117 carries the post-translational modification Phosphothreonine. S121 bears the Phosphoserine mark. Residues 140 to 219 (MVGIRKTAGE…SVILKILPSY (80 aa)) enclose the PDZ domain. The 69-residue stretch at 225 to 293 (PRQVFVKCHF…PSQLLEEKRK (69 aa)) folds into the SH3 domain. In terms of domain architecture, Guanylate kinase-like spans 350-537 (RKTLVLIGAQ…TFRELQTAME (188 aa)).

This sequence belongs to the MAGUK family. In terms of assembly, can homomultimerise. Interacts with CACNG2. Interacts (via the SH3-Guanylate kinase-like sub-module) with DLG4/PSD95 and DLGAP1/GKAP. Interacts (via the PDZ domain) with CADM1 (via C-terminus). Interacts with KCNN2/SK2 (via N-terminal domain). Interacts with SRC. Post-translationally, phosphorylated by SRC. As to expression, expressed in pyramidal neurons of CA1 region of the hippocampus.

Its subcellular location is the cell projection. The protein resides in the dendrite. It localises to the postsynaptic density. It is found in the cytoplasm. The protein localises to the cytoskeleton. Its subcellular location is the membrane. Postsynaptic MAGUK scaffold protein that links CADM1 cell adhesion molecules to core components of the postsynaptic density. In CA1 pyramidal neurons, required for synaptic KCNN2-containing channel function and long-term potentiation expression. Seems to negatively regulate SRC function in epithelial cells. The polypeptide is MAGUK p55 subfamily member 2 (Mus musculus (Mouse)).